A 64-amino-acid polypeptide reads, in one-letter code: Translation machinery-associated protein 7 homolog (64 aa).

A disordered region spans residues 1-64 (MSGREGGKKK…QGGIKKSGKK (64 aa)). Residues 27–44 (VAFKQKQKEQQKALDAAK) show a composition bias toward basic and acidic residues.

It belongs to the TMA7 family.

This is Translation machinery-associated protein 7 homolog from Anopheles funestus (African malaria mosquito).